The primary structure comprises 558 residues: Chaperonin GroEL 1 (558 aa).

Residues 29–32 (TLGP), 86–90 (DGTTT), glycine 413, and aspartate 494 each bind ATP.

Belongs to the chaperonin (HSP60) family. In terms of assembly, forms a cylinder of 14 subunits composed of two heptameric rings stacked back-to-back. Interacts with the co-chaperonin GroES.

It is found in the cytoplasm. The enzyme catalyses ATP + H2O + a folded polypeptide = ADP + phosphate + an unfolded polypeptide.. Functionally, together with its co-chaperonin GroES, plays an essential role in assisting protein folding. The GroEL-GroES system forms a nano-cage that allows encapsulation of the non-native substrate proteins and provides a physical environment optimized to promote and accelerate protein folding. In Acaryochloris marina (strain MBIC 11017), this protein is Chaperonin GroEL 1.